Reading from the N-terminus, the 92-residue chain is Neuropeptide ShK-like2 (92 aa).

An N-terminal signal peptide occupies residues 1–23; the sequence is MTTIRCVLFAVLLFAYCALLIKA. A propeptide spanning residues 24–51 is cleaved from the precursor; it reads RSIDAEAEKTWQEEETKTVAEKSPLKKR. Cystine bridges form between Cys-53-Cys-92, Cys-61-Cys-85, and Cys-70-Cys-89.

Transcripts are first expressed mostly in the endoderm (with rare ectodermal cells) in the late planulae. They are mostly expressed in endodermal ganglion cells in the body column and tentacles in primary polyps, as well as in a small number of ectodermal sensory neurons in tentacles and body wall. They are not expressed in nematocytes. As to expression, transcripts are predominantly expressed in ectodermal sensory neurons in early and late planulae. They are expressed in endodermal ganglion cells in the body column and tentacles in primary polyps, as well as in a small number of ectodermal neurons in pharynx. They are not expressed in nematocytes.

Functionally, in vivo, this neuropeptide induces contraction paralysis followed by death (within 2 hours) on 4 zebrafish larvae on the 15 tested. Also induces body contraction in Nematostella 11-dpf polyps. The sequence is that of Neuropeptide ShK-like2 from Nematostella vectensis (Starlet sea anemone).